A 1132-amino-acid chain; its full sequence is DNA topoisomerase 2 (1132 aa).

Residues asparagine 68, asparagine 100, 137–139 (SSN), and 150–157 (GKNGLGVK) contribute to the ATP site. The tract at residues 327–329 (NKP) is interaction with DNA. Residue 363–365 (QNK) participates in ATP binding. The Toprim domain occupies 442-577 (CTLIVCEGLS…NLKDFPFISS (136 aa)). Positions 448, 538, and 540 each coordinate Mg(2+). The 413-residue stretch at 713-1125 (LPHLIDGLKE…NEGQMWLKDI (413 aa)) folds into the Topo IIA-type catalytic domain. Tyrosine 803 functions as the O-(5'-phospho-DNA)-tyrosine intermediate in the catalytic mechanism. The interval 979–988 (KLRSYIHTSN) is interaction with DNA.

This sequence belongs to the type II topoisomerase family. Mg(2+) is required as a cofactor. The cofactor is Mn(2+). Ca(2+) serves as cofactor.

The catalysed reaction is ATP-dependent breakage, passage and rejoining of double-stranded DNA.. Its function is as follows. Can introduce negative superhelical turns into double-stranded circular DNA. The polypeptide is DNA topoisomerase 2 (TOP2) (Acheta domesticus (House cricket)).